We begin with the raw amino-acid sequence, 491 residues long: Ketol-acid reductoisomerase (NADP(+)) (491 aa).

In terms of domain architecture, KARI N-terminal Rossmann spans 15-208; the sequence is AQLGKCRFMA…GGHRAGVLES (194 aa). NADP(+) is bound by residues 45–48, R68, R76, S78, and 108–110; these read CGAQ and DKQ. H132 is an active-site residue. Position 158 (G158) interacts with NADP(+). 2 consecutive KARI C-terminal knotted domains span residues 209–344 and 345–484; these read SFVA…TASQ and FDGK…MKDM. Mg(2+)-binding residues include D217, E221, E389, and E393. Substrate is bound at residue S414.

The protein belongs to the ketol-acid reductoisomerase family. Mg(2+) is required as a cofactor.

It carries out the reaction (2R)-2,3-dihydroxy-3-methylbutanoate + NADP(+) = (2S)-2-acetolactate + NADPH + H(+). The catalysed reaction is (2R,3R)-2,3-dihydroxy-3-methylpentanoate + NADP(+) = (S)-2-ethyl-2-hydroxy-3-oxobutanoate + NADPH + H(+). Its pathway is amino-acid biosynthesis; L-isoleucine biosynthesis; L-isoleucine from 2-oxobutanoate: step 2/4. It participates in amino-acid biosynthesis; L-valine biosynthesis; L-valine from pyruvate: step 2/4. In terms of biological role, involved in the biosynthesis of branched-chain amino acids (BCAA). Catalyzes an alkyl-migration followed by a ketol-acid reduction of (S)-2-acetolactate (S2AL) to yield (R)-2,3-dihydroxy-isovalerate. In the isomerase reaction, S2AL is rearranged via a Mg-dependent methyl migration to produce 3-hydroxy-3-methyl-2-ketobutyrate (HMKB). In the reductase reaction, this 2-ketoacid undergoes a metal-dependent reduction by NADPH to yield (R)-2,3-dihydroxy-isovalerate. In Enterobacter sp. (strain 638), this protein is Ketol-acid reductoisomerase (NADP(+)).